Reading from the N-terminus, the 209-residue chain is Uracil phosphoribosyltransferase (209 aa).

5-phospho-alpha-D-ribose 1-diphosphate is bound by residues Arg-79, Arg-104, and 131 to 139; that span reads DPMLATGGS. Uracil is bound by residues Ile-194 and 199–201; that span reads GDA. Asp-200 lines the 5-phospho-alpha-D-ribose 1-diphosphate pocket.

The protein belongs to the UPRTase family. Mg(2+) is required as a cofactor.

The enzyme catalyses UMP + diphosphate = 5-phospho-alpha-D-ribose 1-diphosphate + uracil. It functions in the pathway pyrimidine metabolism; UMP biosynthesis via salvage pathway; UMP from uracil: step 1/1. With respect to regulation, allosterically activated by GTP. Its function is as follows. Catalyzes the conversion of uracil and 5-phospho-alpha-D-ribose 1-diphosphate (PRPP) to UMP and diphosphate. The protein is Uracil phosphoribosyltransferase of Listeria monocytogenes serovar 1/2a (strain ATCC BAA-679 / EGD-e).